An 89-amino-acid chain; its full sequence is Small ribosomal subunit protein uS15 (89 aa).

It belongs to the universal ribosomal protein uS15 family. In terms of assembly, part of the 30S ribosomal subunit. Forms a bridge to the 50S subunit in the 70S ribosome, contacting the 23S rRNA.

In terms of biological role, one of the primary rRNA binding proteins, it binds directly to 16S rRNA where it helps nucleate assembly of the platform of the 30S subunit by binding and bridging several RNA helices of the 16S rRNA. Its function is as follows. Forms an intersubunit bridge (bridge B4) with the 23S rRNA of the 50S subunit in the ribosome. The chain is Small ribosomal subunit protein uS15 from Mycobacterium sp. (strain JLS).